The primary structure comprises 152 residues: Large ribosomal subunit protein bL9 (152 aa).

Belongs to the bacterial ribosomal protein bL9 family.

Its function is as follows. Binds to the 23S rRNA. This Nostoc sp. (strain PCC 7120 / SAG 25.82 / UTEX 2576) protein is Large ribosomal subunit protein bL9.